The chain runs to 159 residues: MSDRIYLTRDGYNRLKEELHLLMTETRKEVLEKIAEARSHGDLSENAEYDAAREEQSQLEAKIGEIENKLASATILDPKQIKTDRVYILTSVKLRNLDAEDEIIEYTLVSSEEADSDLGKISVRSPVGRSLIGKSVGDKVTISVPKGELHYEILDIFVK.

Positions 43–75 form a coiled coil; the sequence is LSENAEYDAAREEQSQLEAKIGEIENKLASATI.

The protein belongs to the GreA/GreB family.

Necessary for efficient RNA polymerase transcription elongation past template-encoded arresting sites. The arresting sites in DNA have the property of trapping a certain fraction of elongating RNA polymerases that pass through, resulting in locked ternary complexes. Cleavage of the nascent transcript by cleavage factors such as GreA or GreB allows the resumption of elongation from the new 3'terminus. GreA releases sequences of 2 to 3 nucleotides. This is Transcription elongation factor GreA from Chlorobaculum tepidum (strain ATCC 49652 / DSM 12025 / NBRC 103806 / TLS) (Chlorobium tepidum).